Here is a 245-residue protein sequence, read N- to C-terminus: Ribonuclease 3 (245 aa).

Positions 19–144 (ASILEERTGH…LIATIYLDGG (126 aa)) constitute an RNase III domain. Glu-57 lines the Mg(2+) pocket. Asp-61 is an active-site residue. Residues Asp-130 and Glu-133 each coordinate Mg(2+). Residue Glu-133 is part of the active site. The 70-residue stretch at 169-238 (DAKTELQEWA…AEAMLYREGV (70 aa)) folds into the DRBM domain.

It belongs to the ribonuclease III family. As to quaternary structure, homodimer. Mg(2+) serves as cofactor.

It localises to the cytoplasm. It carries out the reaction Endonucleolytic cleavage to 5'-phosphomonoester.. Digests double-stranded RNA. Involved in the processing of primary rRNA transcript to yield the immediate precursors to the large and small rRNAs (23S and 16S). Processes some mRNAs, and tRNAs when they are encoded in the rRNA operon. Processes pre-crRNA and tracrRNA of type II CRISPR loci if present in the organism. The polypeptide is Ribonuclease 3 (Brucella abortus (strain S19)).